The chain runs to 323 residues: Phospho-N-acetylmuramoyl-pentapeptide-transferase (323 aa).

Transmembrane regions (helical) follow at residues 12–32 (IVMA…IIIP), 58–78 (PTIG…IMVG), 84–104 (AMIA…DDLL), 120–140 (MILL…YIGT), 151–171 (INFG…VTNA), 177–197 (GLDG…GIIS), 200–220 (LGHI…LAFL), 229–250 (VFMG…ALIL), and 303–323 (KIVS…FASL).

This sequence belongs to the glycosyltransferase 4 family. MraY subfamily. Mg(2+) is required as a cofactor.

The protein resides in the cell membrane. The enzyme catalyses UDP-N-acetyl-alpha-D-muramoyl-L-alanyl-gamma-D-glutamyl-meso-2,6-diaminopimeloyl-D-alanyl-D-alanine + di-trans,octa-cis-undecaprenyl phosphate = di-trans,octa-cis-undecaprenyl diphospho-N-acetyl-alpha-D-muramoyl-L-alanyl-D-glutamyl-meso-2,6-diaminopimeloyl-D-alanyl-D-alanine + UMP. The protein operates within cell wall biogenesis; peptidoglycan biosynthesis. In terms of biological role, catalyzes the initial step of the lipid cycle reactions in the biosynthesis of the cell wall peptidoglycan: transfers peptidoglycan precursor phospho-MurNAc-pentapeptide from UDP-MurNAc-pentapeptide onto the lipid carrier undecaprenyl phosphate, yielding undecaprenyl-pyrophosphoryl-MurNAc-pentapeptide, known as lipid I. The polypeptide is Phospho-N-acetylmuramoyl-pentapeptide-transferase (Clostridium perfringens (strain ATCC 13124 / DSM 756 / JCM 1290 / NCIMB 6125 / NCTC 8237 / Type A)).